Reading from the N-terminus, the 695-residue chain is Amphiphysin (695 aa).

2 coiled-coil regions span residues 10 to 83 (AKNV…SLHE) and 144 to 191 (DYDS…QEEL). One can recognise a BAR domain in the interval 24–240 (VLQKLGKADE…MTKLGDQHAD (217 aa)). Disordered stretches follow at residues 244 to 312 (TIQG…VTPT) and 486 to 617 (GAPG…EASQ). At Ser-252 the chain carries Phosphoserine. Residue Thr-260 is modified to Phosphothreonine. Over residues 261–274 (PSPPEEPSPLPSPT) the composition is skewed to pro residues. Residues Ser-262, Ser-268, Ser-272, and Ser-276 each carry the phosphoserine modification. Thr-280 carries the post-translational modification Phosphothreonine. A phosphoserine mark is found at Ser-506 and Ser-638. One can recognise an SH3 domain in the interval 622–695 (GFLYKVETLH…FPENFTRRLD (74 aa)).

In terms of assembly, heterodimer with BIN1. Binds SH3GLB1. Interacts with REPS1 and SGIP1. Binds AP2A2. Interacts with AP2B1. Interacts with DNM1 and SYNJ1. In terms of tissue distribution, neurons, certain endocrine cell types and spermatocytes.

The protein localises to the cytoplasmic vesicle. Its subcellular location is the secretory vesicle. The protein resides in the synaptic vesicle membrane. It localises to the cytoplasm. It is found in the cytoskeleton. In terms of biological role, may participate in mechanisms of regulated exocytosis in synapses and certain endocrine cell types. May control the properties of the membrane associated cytoskeleton. The sequence is that of Amphiphysin (AMPH) from Homo sapiens (Human).